Here is a 214-residue protein sequence, read N- to C-terminus: Cell division protein DamX (214 aa).

2 stretches are compositionally biased toward polar residues: residues 1–14 and 43–53; these read GSGT…QPQQ and QGMTGAASTLP. Residues 1 to 133 form a disordered region; that stretch reads GSGTPTEAQT…SVQSAPGSHY (133 aa). The helical transmembrane segment at 44–65 threads the bilayer; that stretch reads GMTGAASTLPTAPATVMSGAAA. 2 stretches are compositionally biased toward low complexity: residues 78–97 and 110–131; these read QQHK…TQHK and SSTA…APGS. In terms of domain architecture, SPOR spans 127-204; the sequence is SAPGSHYTLQ…VQAKKPWVRP (78 aa).

It belongs to the DamX family.

The protein localises to the cell inner membrane. Its function is as follows. Non-essential cell division protein. The chain is Cell division protein DamX from Serratia marcescens.